The sequence spans 792 residues: 5-methyltetrahydropteroyltriglutamate--homocysteine methyltransferase (792 aa).

5-methyltetrahydropteroyltri-L-glutamate contacts are provided by residues 16-19 (RELK) and Lys112. Residues 432–434 (IGS) and Glu485 contribute to the L-homocysteine site. L-methionine contacts are provided by residues 432–434 (IGS) and Glu485. Residues 516 to 517 (RC) and Trp562 contribute to the 5-methyltetrahydropteroyltri-L-glutamate site. Asp600 provides a ligand contact to L-homocysteine. Residue Asp600 coordinates L-methionine. Position 606 (Glu606) interacts with 5-methyltetrahydropteroyltri-L-glutamate. Residues His642, Cys644, and Glu666 each coordinate Zn(2+). His695 functions as the Proton donor in the catalytic mechanism. Position 727 (Cys727) interacts with Zn(2+).

The protein belongs to the vitamin-B12 independent methionine synthase family. Zn(2+) serves as cofactor.

The catalysed reaction is 5-methyltetrahydropteroyltri-L-glutamate + L-homocysteine = tetrahydropteroyltri-L-glutamate + L-methionine. It participates in amino-acid biosynthesis; L-methionine biosynthesis via de novo pathway; L-methionine from L-homocysteine (MetE route): step 1/1. Its function is as follows. Catalyzes the transfer of a methyl group from 5-methyltetrahydrofolate to homocysteine resulting in methionine formation. This Cupriavidus necator (strain ATCC 17699 / DSM 428 / KCTC 22496 / NCIMB 10442 / H16 / Stanier 337) (Ralstonia eutropha) protein is 5-methyltetrahydropteroyltriglutamate--homocysteine methyltransferase.